A 461-amino-acid polypeptide reads, in one-letter code: Phosphomethylpyrimidine synthase (461 aa).

Substrate-binding positions include N80, M109, Y139, H175, 195–197 (SRG), 236–239 (DSLR), and E275. H279 is a Zn(2+) binding site. Y302 serves as a coordination point for substrate. H343 contributes to the Zn(2+) binding site. 3 residues coordinate [4Fe-4S] cluster: C423, C426, and C431.

The protein belongs to the ThiC family. It depends on [4Fe-4S] cluster as a cofactor.

The catalysed reaction is 5-amino-1-(5-phospho-beta-D-ribosyl)imidazole + S-adenosyl-L-methionine = 4-amino-2-methyl-5-(phosphooxymethyl)pyrimidine + CO + 5'-deoxyadenosine + formate + L-methionine + 3 H(+). Its pathway is cofactor biosynthesis; thiamine diphosphate biosynthesis. In terms of biological role, catalyzes the synthesis of the hydroxymethylpyrimidine phosphate (HMP-P) moiety of thiamine from aminoimidazole ribotide (AIR) in a radical S-adenosyl-L-methionine (SAM)-dependent reaction. The protein is Phosphomethylpyrimidine synthase of Picosynechococcus sp. (strain ATCC 27264 / PCC 7002 / PR-6) (Agmenellum quadruplicatum).